The chain runs to 200 residues: 3-isopropylmalate dehydratase small subunit (200 aa).

The protein belongs to the LeuD family. LeuD type 1 subfamily. As to quaternary structure, heterodimer of LeuC and LeuD.

It catalyses the reaction (2R,3S)-3-isopropylmalate = (2S)-2-isopropylmalate. Its pathway is amino-acid biosynthesis; L-leucine biosynthesis; L-leucine from 3-methyl-2-oxobutanoate: step 2/4. Catalyzes the isomerization between 2-isopropylmalate and 3-isopropylmalate, via the formation of 2-isopropylmaleate. In Haemophilus influenzae (strain 86-028NP), this protein is 3-isopropylmalate dehydratase small subunit.